The sequence spans 314 residues: Methionyl-tRNA formyltransferase (314 aa).

113–116 (SLLP) serves as a coordination point for (6S)-5,6,7,8-tetrahydrofolate.

The protein belongs to the Fmt family.

The catalysed reaction is L-methionyl-tRNA(fMet) + (6R)-10-formyltetrahydrofolate = N-formyl-L-methionyl-tRNA(fMet) + (6S)-5,6,7,8-tetrahydrofolate + H(+). Functionally, attaches a formyl group to the free amino group of methionyl-tRNA(fMet). The formyl group appears to play a dual role in the initiator identity of N-formylmethionyl-tRNA by promoting its recognition by IF2 and preventing the misappropriation of this tRNA by the elongation apparatus. This is Methionyl-tRNA formyltransferase from Stutzerimonas stutzeri (strain A1501) (Pseudomonas stutzeri).